The chain runs to 220 residues: Thiopurine S-methyltransferase (220 aa).

Residues W14, L49, E70, and R127 each contribute to the S-adenosyl-L-methionine site.

Belongs to the class I-like SAM-binding methyltransferase superfamily. TPMT family.

The protein resides in the cytoplasm. It catalyses the reaction S-adenosyl-L-methionine + a thiopurine = S-adenosyl-L-homocysteine + a thiopurine S-methylether.. This Gluconobacter oxydans (strain 621H) (Gluconobacter suboxydans) protein is Thiopurine S-methyltransferase.